A 279-amino-acid chain; its full sequence is Oxygen-dependent coproporphyrinogen-III oxidase (279 aa).

Serine 102 provides a ligand contact to substrate. Residues histidine 106 and histidine 116 each coordinate a divalent metal cation. The active-site Proton donor is histidine 116. 118–120 (NTR) serves as a coordination point for substrate. Residues histidine 149 and histidine 179 each contribute to the a divalent metal cation site. Positions 244-279 (YVEFNLLYDRGTKFGLMTDGNVEAILMSLPPEVKFN) are important for dimerization.

The protein belongs to the aerobic coproporphyrinogen-III oxidase family. Homodimer. Requires a divalent metal cation as cofactor.

It localises to the cytoplasm. The catalysed reaction is coproporphyrinogen III + O2 + 2 H(+) = protoporphyrinogen IX + 2 CO2 + 2 H2O. The protein operates within porphyrin-containing compound metabolism; protoporphyrin-IX biosynthesis; protoporphyrinogen-IX from coproporphyrinogen-III (O2 route): step 1/1. Involved in the heme biosynthesis. Catalyzes the aerobic oxidative decarboxylation of propionate groups of rings A and B of coproporphyrinogen-III to yield the vinyl groups in protoporphyrinogen-IX. The protein is Oxygen-dependent coproporphyrinogen-III oxidase of Rickettsia rickettsii (strain Iowa).